The following is a 262-amino-acid chain: 3-methyl-2-oxobutanoate hydroxymethyltransferase (262 aa).

The Mg(2+) site is built by D42 and D81. Residues 42–43 (DS), D81, and K110 each bind 3-methyl-2-oxobutanoate. E112 lines the Mg(2+) pocket. E179 acts as the Proton acceptor in catalysis.

It belongs to the PanB family. In terms of assembly, homodecamer; pentamer of dimers. Mg(2+) serves as cofactor.

It is found in the cytoplasm. It carries out the reaction 3-methyl-2-oxobutanoate + (6R)-5,10-methylene-5,6,7,8-tetrahydrofolate + H2O = 2-dehydropantoate + (6S)-5,6,7,8-tetrahydrofolate. It participates in cofactor biosynthesis; (R)-pantothenate biosynthesis; (R)-pantoate from 3-methyl-2-oxobutanoate: step 1/2. Functionally, catalyzes the reversible reaction in which hydroxymethyl group from 5,10-methylenetetrahydrofolate is transferred onto alpha-ketoisovalerate to form ketopantoate. The sequence is that of 3-methyl-2-oxobutanoate hydroxymethyltransferase from Methylobacillus flagellatus (strain ATCC 51484 / DSM 6875 / VKM B-1610 / KT).